The primary structure comprises 73 residues: Translation initiation factor IF-1 (73 aa).

The S1-like domain occupies M1–K72.

It belongs to the IF-1 family. Component of the 30S ribosomal translation pre-initiation complex which assembles on the 30S ribosome in the order IF-2 and IF-3, IF-1 and N-formylmethionyl-tRNA(fMet); mRNA recruitment can occur at any time during PIC assembly.

Its subcellular location is the cytoplasm. In terms of biological role, one of the essential components for the initiation of protein synthesis. Stabilizes the binding of IF-2 and IF-3 on the 30S subunit to which N-formylmethionyl-tRNA(fMet) subsequently binds. Helps modulate mRNA selection, yielding the 30S pre-initiation complex (PIC). Upon addition of the 50S ribosomal subunit IF-1, IF-2 and IF-3 are released leaving the mature 70S translation initiation complex. This Legionella pneumophila (strain Paris) protein is Translation initiation factor IF-1.